Consider the following 712-residue polypeptide: MEIPPQEAPPGPGADADADAEAETEEASAEAESPTGTSPPADGRLKAAAKRVTFPSDEDIVSGAVEPKDPWRHAQNVTVDEVISAYRQACQKLNCRQIPKLLRQLQEFTDLEQRINCLDLKGEKLDYKTCEALEEVFKRLQFKVVDLEQTNLDEDGASALFDMIEYYESATHLNISFNKHIGTRGWQAAAHMMRKTSCLQYLDARNTPLLDHSAPFVARALRIRSSLAVLHLENASLSGRPLMLLATALKMNMNLRELYLADNKLNGLQDSAQLGNLLKFNCSLQILDLRNNHVLDSGLAYICEGLKEQRKGLVTLVLWNNQLTHTGMAFLGMALPHTQSLETLNLGHNPIGNEGVRNLKNGLISNRSVLRLGLASTKLTCEGAVAVAEFIAESPRLLRLDLRENEIKTGGLMALSLALKVNHSLLRLDLDREPKKEPVKSFIETQKALLAEIQNGCKRNFVLVREREEKQQLQLSASMPEITITAPQPLEESGELPAVGSQNGAPRPGPGPDSDSDSDSDREEQEEEEEDQRNQQRDEGGNDQSSLASCPALIPSTDSLGPGDKSPPSSPSSPTEQRISVSSPGRGHKVFVVTRVESPPERPEPPVPPTFVSSPPPSPPSPPASPPSQTMDTQDPESSEAQPQLEPSQAGQPLPNGLKPEFALALPPEPPPGLEAKGGSCSLEHALHRSQGVSKLEELLLEASQEAPRDTL.

A compositionally biased stretch (pro residues) spans methionine 1 to proline 12. The interval methionine 1 to alanine 47 is disordered. Residues alanine 16–alanine 29 show a composition bias toward acidic residues. Residues serine 56 and serine 62 each carry the phosphoserine modification. LRR repeat units lie at residues serine 226–alanine 246, asparagine 254–glycine 275, serine 283–cysteine 303, glycine 312–glycine 332, and serine 340–lysine 360. A disordered region spans residues glutamate 492–serine 680. Residues serine 514–aspartate 531 show a composition bias toward acidic residues. Serine 583 bears the Phosphoserine mark. Over residues proline 605 to proline 626 the composition is skewed to pro residues. Residues serine 639–glycine 651 are compositionally biased toward polar residues.

This sequence belongs to the PPP1R37 family. As to quaternary structure, interacts with PPP1CA.

Its function is as follows. Inhibits phosphatase activity of protein phosphatase 1 (PP1) complexes. The protein is Protein phosphatase 1 regulatory subunit 37 (Ppp1r37) of Mus musculus (Mouse).